A 597-amino-acid polypeptide reads, in one-letter code: Probable HECT-type ubiquitin ligase-interacting protein creD (597 aa).

2 disordered regions span residues 375 to 398 (ELDP…GTLS) and 432 to 499 (LNIT…MATP). A compositionally biased stretch (basic and acidic residues) spans 443-455 (TDHESQNDSEHRR). Residues 465 to 481 (PSSGSNSHSPSSPVLSR) show a composition bias toward low complexity. Residues 482–492 (RPSDEVDHEHV) are compositionally biased toward basic and acidic residues.

This sequence belongs to the arrestin family. Interacts with hulA.

Its function is as follows. Component of the regulatory network controlling carbon source utilization through ubiquitination and deubiquitination involving creA, creB, creC, creD and acrB. May be involved in signaling by recognizing appropriately phosphorylated substrates via its arrestin domains and then recruit a HECT-type ubiquitin ligase such as hulA, leading to ubiquitination of the substrate, providing a link between ubiquitination and phosphorylation in protein regulation and stability. This is Probable HECT-type ubiquitin ligase-interacting protein creD (creD) from Aspergillus oryzae (strain ATCC 42149 / RIB 40) (Yellow koji mold).